The primary structure comprises 630 residues: Forkhead box protein O (630 aa).

The disordered stretch occupies residues 1–45; it reads MDGFVQEWSNLPRSDNGLHMDQLVGELPTDGGFEPQTRARSNTWP. At T43 the chain carries Phosphothreonine; by PKB/AKT1. A DNA-binding region (fork-head) is located at residues 92-198; it reads WGNLSYADLI…ETSRYEKRRG (107 aa). S187 carries the post-translational modification Phosphoserine; by PKB/AKT1. Positions 214–260 are disordered; it reads GLNDATPSPSSSVSEGLDHFPESPLHSGGFQLSPDFRQRASSNASSC. Over residues 218–227 the composition is skewed to polar residues; sequence ATPSPSSSVS. The residue at position 255 (S255) is a Phosphoserine; by PKB/AKT1. S258, S259, and S264 each carry phosphoserine. 2 disordered regions span residues 318–379 and 403–432; these read SAAS…QQQQ and TRDGLSPNSVTTTMSPAYPNSEPSSDSLNT. 2 stretches are compositionally biased toward low complexity: residues 332–350 and 367–379; these read QQQQQQQQQQAQQQSQLPQ and QPQAQQQQQQQQQ. 2 stretches are compositionally biased toward polar residues: residues 408 to 417 and 423 to 432; these read SPNSVTTTMS and SEPSSDSLNT.

Interacts with melt.

The protein resides in the cytoplasm. The protein localises to the nucleus. Its function is as follows. Transcription factor involved in the regulation of the insulin signaling pathway. Consistently activates both the downstream target Thor\d4EBP and the feedback control target InR. Involved in negative regulation of the cell cycle, modulating cell growth and proliferation. In response to cellular stresses, such as nutrient deprivation or increased levels of reactive oxygen species, foxo is activated and inhibits growth through the action of target genes such as Thor. Foxo activated in the adult fat body can regulate lifespan in adults; an insulin peptide itself may function as one secondary messenger of insulin-regulated aging. Also regulates Lip4, homolog of human acid lipases, thereby acting as a key modulator of lipid metabolism by insulin signaling and integrates insulin responses to glucose and lipid homeostasis. In Drosophila grimshawi (Hawaiian fruit fly), this protein is Forkhead box protein O.